We begin with the raw amino-acid sequence, 156 residues long: 16 kDa phloem protein 1 (156 aa).

In terms of domain architecture, C2 spans Met-1 to Ala-108. Ca(2+) contacts are provided by Asp-20, Asp-26, Asp-78, Asp-80, Ser-83, and Asp-86.

The cofactor is Ca(2+).

In terms of biological role, binds to both sense and antisense RNA. Can also bind sheared DNA and dodecamer DNA with a low affinity. Interacts with mesophyll plasmodesmata to mediate its own cell-to-cell transport and potentiate RNA trafficking. May play a role in plant defense signaling. This is 16 kDa phloem protein 1 from Arabidopsis thaliana (Mouse-ear cress).